We begin with the raw amino-acid sequence, 255 residues long: Imidazole glycerol phosphate synthase subunit HisF (255 aa).

Catalysis depends on residues aspartate 11 and aspartate 130.

Belongs to the HisA/HisF family. As to quaternary structure, heterodimer of HisH and HisF.

It is found in the cytoplasm. It carries out the reaction 5-[(5-phospho-1-deoxy-D-ribulos-1-ylimino)methylamino]-1-(5-phospho-beta-D-ribosyl)imidazole-4-carboxamide + L-glutamine = D-erythro-1-(imidazol-4-yl)glycerol 3-phosphate + 5-amino-1-(5-phospho-beta-D-ribosyl)imidazole-4-carboxamide + L-glutamate + H(+). It participates in amino-acid biosynthesis; L-histidine biosynthesis; L-histidine from 5-phospho-alpha-D-ribose 1-diphosphate: step 5/9. Functionally, IGPS catalyzes the conversion of PRFAR and glutamine to IGP, AICAR and glutamate. The HisF subunit catalyzes the cyclization activity that produces IGP and AICAR from PRFAR using the ammonia provided by the HisH subunit. This Rhodopseudomonas palustris (strain BisB5) protein is Imidazole glycerol phosphate synthase subunit HisF.